The primary structure comprises 589 residues: NADP-dependent malic enzyme (589 aa).

Tyr-137 functions as the Proton donor in the catalytic mechanism. Arg-190 provides a ligand contact to NAD(+). Lys-208 functions as the Proton acceptor in the catalytic mechanism. A divalent metal cation contacts are provided by Glu-280, Asp-281, and Asp-304. Asp-304 provides a ligand contact to NAD(+). 333-349 (LFLGAGEAGTGIAELIA) contacts NADP(+). Asn-445 is an NAD(+) binding site.

The protein belongs to the malic enzymes family. Homotetramer. Mg(2+) serves as cofactor. Mn(2+) is required as a cofactor.

The protein resides in the cytoplasm. It carries out the reaction (S)-malate + NADP(+) = pyruvate + CO2 + NADPH. The catalysed reaction is oxaloacetate + H(+) = pyruvate + CO2. The sequence is that of NADP-dependent malic enzyme (ME1) from Phaseolus vulgaris (Kidney bean).